The sequence spans 264 residues: Thymidylate synthase (264 aa).

Arg21 contacts dUMP. His51 contacts (6R)-5,10-methylene-5,6,7,8-tetrahydrofolate. 126–127 serves as a coordination point for dUMP; sequence RR. Cys146 acts as the Nucleophile in catalysis. Residues 166–169, Asn177, and 207–209 each bind dUMP; these read RSAD and HLY. Residue Asp169 participates in (6R)-5,10-methylene-5,6,7,8-tetrahydrofolate binding. Ala263 lines the (6R)-5,10-methylene-5,6,7,8-tetrahydrofolate pocket.

The protein belongs to the thymidylate synthase family. Bacterial-type ThyA subfamily. In terms of assembly, homodimer.

It localises to the cytoplasm. It catalyses the reaction dUMP + (6R)-5,10-methylene-5,6,7,8-tetrahydrofolate = 7,8-dihydrofolate + dTMP. Its pathway is pyrimidine metabolism; dTTP biosynthesis. Catalyzes the reductive methylation of 2'-deoxyuridine-5'-monophosphate (dUMP) to 2'-deoxythymidine-5'-monophosphate (dTMP) while utilizing 5,10-methylenetetrahydrofolate (mTHF) as the methyl donor and reductant in the reaction, yielding dihydrofolate (DHF) as a by-product. This enzymatic reaction provides an intracellular de novo source of dTMP, an essential precursor for DNA biosynthesis. This Methylorubrum extorquens (strain CM4 / NCIMB 13688) (Methylobacterium extorquens) protein is Thymidylate synthase.